The sequence spans 251 residues: Flap endonuclease Xni (251 aa).

Asp104 is a binding site for Mg(2+). In terms of domain architecture, 5'-3' exonuclease spans 160–250 (VQPQQLPDYW…DGNLQQLRLK (91 aa)). Residues Leu171, Ala172, Pro180, Val182, and Ile185 each contribute to the K(+) site. The interval 184–189 (GIGPKS) is interaction with DNA.

This sequence belongs to the Xni family. The cofactor is Mg(2+). K(+) is required as a cofactor.

Has flap endonuclease activity. During DNA replication, flap endonucleases cleave the 5'-overhanging flap structure that is generated by displacement synthesis when DNA polymerase encounters the 5'-end of a downstream Okazaki fragment. This is Flap endonuclease Xni from Escherichia fergusonii (strain ATCC 35469 / DSM 13698 / CCUG 18766 / IAM 14443 / JCM 21226 / LMG 7866 / NBRC 102419 / NCTC 12128 / CDC 0568-73).